The following is a 356-amino-acid chain: DNA polymerase IV (356 aa).

Residues 7–188 (IIHIDMDCFY…LPLKKISGVG (182 aa)) enclose the UmuC domain. The Mg(2+) site is built by Asp11 and Asp106. Glu107 is an active-site residue.

The protein belongs to the DNA polymerase type-Y family. As to quaternary structure, monomer. Mg(2+) serves as cofactor.

It localises to the cytoplasm. The enzyme catalyses DNA(n) + a 2'-deoxyribonucleoside 5'-triphosphate = DNA(n+1) + diphosphate. Functionally, poorly processive, error-prone DNA polymerase involved in untargeted mutagenesis. Copies undamaged DNA at stalled replication forks, which arise in vivo from mismatched or misaligned primer ends. These misaligned primers can be extended by PolIV. Exhibits no 3'-5' exonuclease (proofreading) activity. May be involved in translesional synthesis, in conjunction with the beta clamp from PolIII. The polypeptide is DNA polymerase IV (Glaesserella parasuis serovar 5 (strain SH0165) (Haemophilus parasuis)).